The sequence spans 197 residues: MAEPVEDSVDEISSEGDSDVEESKGPEGSAPKNRQDKNERKSRKLLGKLGMKPVDGVTKVCIKKSKQIYFVVNKPDVYKLPNSDTYVIFGEAKVEDMSQNSALEAAQRLSQLSSALQAVGADRGTDSSAAAHASGHDHAHDHDHSHGDCASKADESSVNQSDIDLVVSQVGCTREQAVEALIKNKGDIVETIMQLST.

Positions M1–V20 are enriched in acidic residues. Disordered stretches follow at residues M1 to L46 and G120 to D154. In terms of domain architecture, NAC-A/B spans D36–S101. Positions S134–D154 are enriched in basic and acidic residues. The UBA domain occupies V158 to L195.

This sequence belongs to the NAC-alpha family.

Its function is as follows. May promote appropriate targeting of ribosome-nascent polypeptide complexes. This is Nascent polypeptide-associated complex subunit alpha from Babesia divergens.